The chain runs to 33 residues: Cytochrome b6-f complex subunit 6 (33 aa).

Residues 4-24 (ITIISYFGFLLASIIFTLVLF) form a helical membrane-spanning segment.

This sequence belongs to the PetL family. As to quaternary structure, the 4 large subunits of the cytochrome b6-f complex are cytochrome b6, subunit IV (17 kDa polypeptide, PetD), cytochrome f and the Rieske protein, while the 4 small subunits are PetG, PetL, PetM and PetN. The complex functions as a dimer.

It is found in the plastid. The protein resides in the chloroplast thylakoid membrane. Functionally, component of the cytochrome b6-f complex, which mediates electron transfer between photosystem II (PSII) and photosystem I (PSI), cyclic electron flow around PSI, and state transitions. PetL is important for photoautotrophic growth as well as for electron transfer efficiency and stability of the cytochrome b6-f complex. The sequence is that of Cytochrome b6-f complex subunit 6 from Pinus thunbergii (Japanese black pine).